The chain runs to 454 residues: Kynurenine 3-monooxygenase (454 aa).

This sequence belongs to the aromatic-ring hydroxylase family. KMO subfamily. Requires FAD as cofactor.

The enzyme catalyses L-kynurenine + NADPH + O2 + H(+) = 3-hydroxy-L-kynurenine + NADP(+) + H2O. The protein operates within cofactor biosynthesis; NAD(+) biosynthesis; quinolinate from L-kynurenine: step 1/3. Functionally, catalyzes the hydroxylation of L-kynurenine (L-Kyn) to form 3-hydroxy-L-kynurenine (L-3OHKyn). Required for synthesis of quinolinic acid. This Salinispora arenicola (strain CNS-205) protein is Kynurenine 3-monooxygenase.